The chain runs to 89 residues: Probable Fe(2+)-trafficking protein (89 aa).

The protein belongs to the Fe(2+)-trafficking protein family.

Could be a mediator in iron transactions between iron acquisition and iron-requiring processes, such as synthesis and/or repair of Fe-S clusters in biosynthetic enzymes. In Acinetobacter baumannii (strain AB0057), this protein is Probable Fe(2+)-trafficking protein.